We begin with the raw amino-acid sequence, 166 residues long: Disulfide bond reductase DsbH (166 aa).

The signal sequence occupies residues 1-22 (MKFWLQGCAFVGCLLLTLPCCA). The Thioredoxin domain occupies 32-166 (LQQTRPIAAA…SKVKSALKLR (135 aa)). Cys-72 and Cys-75 are disulfide-bonded. Position 73–74 (73–74 (MW)) interacts with substrate.

As to quaternary structure, monomer.

The protein resides in the periplasm. In terms of biological role, catalyzes the reduction of disulfide bonds. May function in reducing intermolecular disulfides between proteins and small molecules in the periplasm, or keeping a specific subset of periplasmic proteins reduced, or maintaining the periplasm of Chlamydia in a generally reducing state. Seems to be unable to oxidize thiols into disulfides and does not display disulfide bond isomerase activity. This Chlamydia pneumoniae (Chlamydophila pneumoniae) protein is Disulfide bond reductase DsbH (dsbH).